The following is a 542-amino-acid chain: NAD-dependent deacetylase sir2D (542 aa).

2 disordered regions span residues 1–37 and 136–160; these read MNKR…NTPL and ETST…TTTT. Positions 8–25 are enriched in low complexity; it reads NNELNEIQNNQNKNNNNK. Positions 165–193 form a coiled coil; that stretch reads NETILLDILNNNKDEVDDEIQRIGNNVGN. One can recognise a Deacetylase sirtuin-type domain in the interval 283–542; the sequence is ATLDLSTFEK…VQDLLNKVKW (260 aa). The Proton acceptor role is filled by His-411. Cys-419, Cys-422, Cys-443, and Cys-446 together coordinate Zn(2+).

It belongs to the sirtuin family. It depends on Zn(2+) as a cofactor.

The catalysed reaction is N(6)-acetyl-L-lysyl-[protein] + NAD(+) + H2O = 2''-O-acetyl-ADP-D-ribose + nicotinamide + L-lysyl-[protein]. NAD-dependent deacetylase, which plays an important role in the regulation of transcriptional repression. In Dictyostelium discoideum (Social amoeba), this protein is NAD-dependent deacetylase sir2D (sir2D).